A 281-amino-acid chain; its full sequence is Phosphatidylserine decarboxylase proenzyme (281 aa).

Catalysis depends on charge relay system; for autoendoproteolytic cleavage activity residues D90, H143, and S248. S248 acts as the Schiff-base intermediate with substrate; via pyruvic acid; for decarboxylase activity in catalysis. S248 carries the post-translational modification Pyruvic acid (Ser); by autocatalysis.

Belongs to the phosphatidylserine decarboxylase family. PSD-B subfamily. Prokaryotic type I sub-subfamily. Heterodimer of a large membrane-associated beta subunit and a small pyruvoyl-containing alpha subunit. Pyruvate is required as a cofactor. Is synthesized initially as an inactive proenzyme. Formation of the active enzyme involves a self-maturation process in which the active site pyruvoyl group is generated from an internal serine residue via an autocatalytic post-translational modification. Two non-identical subunits are generated from the proenzyme in this reaction, and the pyruvate is formed at the N-terminus of the alpha chain, which is derived from the carboxyl end of the proenzyme. The autoendoproteolytic cleavage occurs by a canonical serine protease mechanism, in which the side chain hydroxyl group of the serine supplies its oxygen atom to form the C-terminus of the beta chain, while the remainder of the serine residue undergoes an oxidative deamination to produce ammonia and the pyruvoyl prosthetic group on the alpha chain. During this reaction, the Ser that is part of the protease active site of the proenzyme becomes the pyruvoyl prosthetic group, which constitutes an essential element of the active site of the mature decarboxylase.

It localises to the cell membrane. The enzyme catalyses a 1,2-diacyl-sn-glycero-3-phospho-L-serine + H(+) = a 1,2-diacyl-sn-glycero-3-phosphoethanolamine + CO2. Its pathway is phospholipid metabolism; phosphatidylethanolamine biosynthesis; phosphatidylethanolamine from CDP-diacylglycerol: step 2/2. In terms of biological role, catalyzes the formation of phosphatidylethanolamine (PtdEtn) from phosphatidylserine (PtdSer). The sequence is that of Phosphatidylserine decarboxylase proenzyme from Francisella philomiragia subsp. philomiragia (strain ATCC 25017 / CCUG 19701 / FSC 153 / O#319-036).